A 359-amino-acid polypeptide reads, in one-letter code: Cinnamyl alcohol dehydrogenase 8 (359 aa).

A Zn(2+)-binding site is contributed by C46. Position 48 (S48) interacts with NADP(+). Zn(2+)-binding residues include H68, E69, C99, C102, C105, C113, and C162. NADP(+) contacts are provided by residues T166, 187 to 192, 210 to 215, T250, G274, and 297 to 299; these read GLGGLG, STSEKK, and SMI.

Belongs to the zinc-containing alcohol dehydrogenase family. As to quaternary structure, homodimer. It depends on Zn(2+) as a cofactor. As to expression, expressed in the differentiation and elongation zones of primary and lateral roots. Expressed in the hypocotyl, cotyledon veins, vasculature of the first rosette leaves, hydathodes and trichomes. In stems, expressed in the vascular cambium and developing xylem tissues. Expressed in the style, anthers, stamen filaments, stigmatic regions in flowers, and abscission and style regions of siliques.

The enzyme catalyses (E)-cinnamyl alcohol + NADP(+) = (E)-cinnamaldehyde + NADPH + H(+). It functions in the pathway aromatic compound metabolism; phenylpropanoid biosynthesis. Its function is as follows. Involved in lignin biosynthesis. Catalyzes the final step specific for the production of lignin monomers. Catalyzes the NADPH-dependent reduction of coniferaldehyde, 5-hydroxyconiferaldehyde, sinapaldehyde, 4-coumaraldehyde and caffeyl aldehyde to their respective alcohols. The polypeptide is Cinnamyl alcohol dehydrogenase 8 (CAD8) (Arabidopsis thaliana (Mouse-ear cress)).